Reading from the N-terminus, the 125-residue chain is Small ribosomal subunit protein uS12 (125 aa).

At Asp-89 the chain carries 3-methylthioaspartic acid.

The protein belongs to the universal ribosomal protein uS12 family. In terms of assembly, part of the 30S ribosomal subunit. Contacts proteins S8 and S17. May interact with IF1 in the 30S initiation complex.

Functionally, with S4 and S5 plays an important role in translational accuracy. Its function is as follows. Interacts with and stabilizes bases of the 16S rRNA that are involved in tRNA selection in the A site and with the mRNA backbone. Located at the interface of the 30S and 50S subunits, it traverses the body of the 30S subunit contacting proteins on the other side and probably holding the rRNA structure together. The combined cluster of proteins S8, S12 and S17 appears to hold together the shoulder and platform of the 30S subunit. The chain is Small ribosomal subunit protein uS12 from Clostridium acetobutylicum (strain ATCC 824 / DSM 792 / JCM 1419 / IAM 19013 / LMG 5710 / NBRC 13948 / NRRL B-527 / VKM B-1787 / 2291 / W).